Reading from the N-terminus, the 997-residue chain is NLR family CARD domain-containing protein 4 (997 aa).

The CARD domain occupies 1-88 (MDLIRKNYAE…FFYEDLIGQR (88 aa)). Residues 95–300 (EEDLENLADH…RCGALIAETS (206 aa)) are nucleotide-binding domain (NBD). The 314-residue stretch at 165-478 (SPCVIEGEAG…VTKGEDFLNK (314 aa)) folds into the NACHT domain. 171-178 (GEAGKGKT) serves as a coordination point for ATP. The tract at residues 358 to 465 (MNTQTTLFST…RLSQLLSSED (108 aa)) is winged-helix domain (WHD). LRR repeat units follow at residues 550-570 (LFSE…HIEF), 629-652 (NQSI…DIKY), 708-731 (MTEM…LLEG), 735-758 (LVGL…TLAE), 760-785 (ILSL…ESIA), 797-820 (ELKL…LYSL), 821-843 (SHIE…SVEE), 851-875 (LDAI…VLPT), 884-905 (ELAF…SYIN), 908-935 (FENL…ILQY), 937-958 (PNLT…DLVR), and 972-994 (TMEL…AKNM).

Its subcellular location is the cytoplasm. The protein resides in the cytosol. In terms of biological role, key component of inflammasomes that indirectly senses specific proteins from pathogenic bacteria and fungi and responds by assembling an inflammasome complex that promotes caspase-1 activation, cytokine production and macrophage pyroptosis. This chain is NLR family CARD domain-containing protein 4 (nlrc4), found in Xenopus tropicalis (Western clawed frog).